The primary structure comprises 1805 residues: Obscurin-like protein 1 (1805 aa).

S10 is modified (phosphoserine). Positions 12-100 (PCFLRFPRPV…GEAYAAAAVT (89 aa)) constitute an Ig-like 1 domain. The segment at 17-19 (FPR) is interaction with TTN. Residues C33 and C84 are joined by a disulfide bond. The interaction with TTN stretch occupies residues 85-94 (RARNAAGEAY). The span at 104–122 (PPAPEPEPQSSECPPPPPG) shows a compositional bias: pro residues. Positions 104-131 (PPAPEPEPQSSECPPPPPGTGEGAPVFL) are disordered. 3 Ig-like domains span residues 128–225 (PVFL…ALLQ), 240–330 (PPVR…QTLS), and 339–425 (PRLR…ANVT). Cystine bridges form between C149–C209, C267–C319, and C362–C412. One can recognise a Fibronectin type-III domain in the interval 517–615 (PPGPPVLVEM…FNGSAHLVPT (99 aa)). 10 Ig-like domains span residues 720–800 (PQDK…FSVT), 804–891 (PPVH…FTVT), 902–982 (PNGK…FTIT), 986–1075 (PPVR…VTVT), 1078–1165 (PERI…FNVS), 1176–1261 (PEAV…FNVQ), 1266–1351 (PPVK…ARLH), 1355–1442 (TELL…ARLS), 1536–1628 (PVTI…REVS), and 1702–1798 (PAQS…ADTQ). 6 disulfide bridges follow: C738–C788, C829–C879, C920–C970, C1011–C1061, C1103–C1153, and C1195–C1245. A disulfide bridge connects residues C1558 and C1608.

Component of the 3M complex, composed of core components CUL7, CCDC8 and OBSL1. Interacts with CCDC8. Interacts with CUL7; the interaction is direct. Interacts with FBXW8. Interacts (via N-terminal Ig-like domain) with TTN/titin (via C-terminal Ig-like domain); the interaction is direct. In terms of tissue distribution, expressed in granule neurons, with levels decreasing with neuronal maturation.

Its subcellular location is the cytoplasm. It localises to the perinuclear region. The protein localises to the golgi apparatus. Functionally, core component of the 3M complex, a complex required to regulate microtubule dynamics and genome integrity. It is unclear how the 3M complex regulates microtubules, it could act by controlling the level of a microtubule stabilizer. Acts as a regulator of the Cul7-RING(FBXW8) ubiquitin-protein ligase, playing a critical role in the ubiquitin ligase pathway that regulates Golgi morphogenesis and dendrite patterning in brain. Required to localize CUL7 to the Golgi apparatus in neurons. The protein is Obscurin-like protein 1 (Obsl1) of Rattus norvegicus (Rat).